A 469-amino-acid chain; its full sequence is Probable Xaa-Pro aminopeptidase PEPP (469 aa).

Residues aspartate 264, aspartate 275, glutamate 398, and glutamate 438 each coordinate Mn(2+).

The protein belongs to the peptidase M24B family. The cofactor is Mn(2+).

It catalyses the reaction Release of any N-terminal amino acid, including proline, that is linked to proline, even from a dipeptide or tripeptide.. Its function is as follows. Catalyzes the removal of a penultimate prolyl residue from the N-termini of peptides. The sequence is that of Probable Xaa-Pro aminopeptidase PEPP (PEPP) from Ajellomyces capsulatus (strain H143) (Darling's disease fungus).